The sequence spans 88 residues: MGNWGLGIAPWVDGESELEFRRLGMQGPLEALRRREWNTQRASFSFSFLIALSPHTVDYCHSYELFNRRWHGHVLATQRPSLFILMLV.

In terms of tissue distribution, expressed in liver. Expression is either down-regulated or lost in hepatocellular carcinomas (HCC).

The protein resides in the cytoplasm. The sequence is that of Putative cancer susceptibility gene HEPN1 protein (HEPN1) from Homo sapiens (Human).